Consider the following 945-residue polypeptide: Isoleucine--tRNA ligase 1 (945 aa).

The 'HIGH' region signature appears at 66-76 (PYANGDIHLGH). Glu581 provides a ligand contact to L-isoleucyl-5'-AMP. The short motif at 622–626 (KMSKS) is the 'KMSKS' region element. ATP is bound at residue Lys625. The Zn(2+) site is built by Cys908, Cys911, Cys928, and Cys931.

Belongs to the class-I aminoacyl-tRNA synthetase family. IleS type 1 subfamily. Monomer. Requires Zn(2+) as cofactor.

The protein resides in the cytoplasm. It carries out the reaction tRNA(Ile) + L-isoleucine + ATP = L-isoleucyl-tRNA(Ile) + AMP + diphosphate. Catalyzes the attachment of isoleucine to tRNA(Ile). As IleRS can inadvertently accommodate and process structurally similar amino acids such as valine, to avoid such errors it has two additional distinct tRNA(Ile)-dependent editing activities. One activity is designated as 'pretransfer' editing and involves the hydrolysis of activated Val-AMP. The other activity is designated 'posttransfer' editing and involves deacylation of mischarged Val-tRNA(Ile). The protein is Isoleucine--tRNA ligase 1 of Burkholderia pseudomallei (strain K96243).